The chain runs to 251 residues: Isoprenyl transferase (251 aa).

Asp-31 is an active-site residue. Position 31 (Asp-31) interacts with Mg(2+). Substrate is bound by residues 32–35 (GNGR), Trp-36, Arg-44, His-48, and 76–78 (STE). Asn-79 serves as the catalytic Proton acceptor. Substrate is bound by residues Trp-80, Arg-82, Arg-199, and 205–207 (RIS). Glu-218 provides a ligand contact to Mg(2+).

The protein belongs to the UPP synthase family. In terms of assembly, homodimer. It depends on Mg(2+) as a cofactor.

Functionally, catalyzes the condensation of isopentenyl diphosphate (IPP) with allylic pyrophosphates generating different type of terpenoids. This Thermosynechococcus vestitus (strain NIES-2133 / IAM M-273 / BP-1) protein is Isoprenyl transferase.